An 889-amino-acid polypeptide reads, in one-letter code: Autophagy-related protein 9 (889 aa).

The Cytoplasmic portion of the chain corresponds to 1–248 (MGDLNKHTFL…NGYRCIILSR (248 aa)). Disordered stretches follow at residues 41–77 (EEHQ…DLLY) and 108–132 (RRPH…PPIG). The segment covering 123-132 (PPSPAEPPIG) has biased composition (pro residues). A helical transmembrane segment spans residues 249 to 269 (VSDLLIIVFVVWLTSFMGNCV). The Lumenal portion of the chain corresponds to 270–299 (DYNQLMNGNATKYSDVVVDKCYSKISLSQK). The chain crosses the membrane as a helical span at residues 300 to 320 (LFFLVLFAILVLRIKSFYSHF). Residues 321-395 (KDLKEIKNFY…DIANRLMRKE (75 aa)) lie on the Cytoplasmic side of the membrane. An intramembrane region is located at residue N396. Over 397 to 468 (YMIAIFNKNV…TEMRKRFRLA (72 aa)) the chain is Cytoplasmic. A helical membrane pass occupies residues 469-489 (GILSIFLTPFLVIYFLLYFFL). At 490–549 (KFFYDIKTNPSLVGSREYSPYARWKLREFNELPHMFDKRLKMSRARATEYINQFPKEATN) the chain is on the lumenal side. The chain crosses the membrane as a helical span at residues 550 to 570 (IILNFVAFVTGSLVTILVVLT). The Cytoplasmic segment spans residues 571–651 (VLGHENFLNF…VKNEFCKLFN (81 aa)). The stretch at 652–672 (LRLILVLKEITSLIMLPYILY) is an intramembrane region. Residues 673–889 (CRLPDVSEKV…QIYKHKEGVN (217 aa)) are Cytoplasmic-facing.

It belongs to the ATG9 family. As to quaternary structure, homotrimer; forms a homotrimer with a central pore that forms a path between the two membrane leaflets. Post-translationally, phosphorylated by ATG1. ATG1 phosphorylation is required for preautophagosome elongation.

It is found in the preautophagosomal structure membrane. The protein localises to the cytoplasmic vesicle membrane. Its subcellular location is the golgi apparatus membrane. The protein resides in the endoplasmic reticulum membrane. The enzyme catalyses a 1,2-diacyl-sn-glycero-3-phosphocholine(in) = a 1,2-diacyl-sn-glycero-3-phosphocholine(out). The catalysed reaction is a 1,2-diacyl-sn-glycero-3-phospho-L-serine(in) = a 1,2-diacyl-sn-glycero-3-phospho-L-serine(out). It catalyses the reaction a 1,2-diacyl-sn-glycero-3-phosphoethanolamine(in) = a 1,2-diacyl-sn-glycero-3-phosphoethanolamine(out). It carries out the reaction a 1,2-diacyl-sn-glycero-3-phospho-(1D-myo-inositol-3-phosphate)(in) = a 1,2-diacyl-sn-glycero-3-phospho-(1D-myo-inositol-3-phosphate)(out). Phospholipid scramblase involved in autophagy and cytoplasm to vacuole transport (Cvt) vesicle formation. Cycles between the preautophagosomal structure/phagophore assembly site (PAS) and the cytoplasmic vesicle pool and supplies membrane for the growing autophagosome. Lipid scramblase activity plays a key role in preautophagosomal structure/phagophore assembly by distributing the phospholipids that arrive through ATG2 from the cytoplasmic to the luminal leaflet of the bilayer, thereby driving autophagosomal membrane expansion. Required for mitophagy. Also involved in endoplasmic reticulum-specific autophagic process and is essential for the survival of cells subjected to severe ER stress. Different machineries are required for anterograde trafficking to the PAS during either the Cvt pathway or bulk autophagy and for retrograde trafficking. The chain is Autophagy-related protein 9 (ATG9) from Pichia angusta (Yeast).